The sequence spans 424 residues: Histidine--tRNA ligase (424 aa).

This sequence belongs to the class-II aminoacyl-tRNA synthetase family. Homodimer.

It localises to the cytoplasm. The enzyme catalyses tRNA(His) + L-histidine + ATP = L-histidyl-tRNA(His) + AMP + diphosphate + H(+). The polypeptide is Histidine--tRNA ligase (Salmonella gallinarum (strain 287/91 / NCTC 13346)).